We begin with the raw amino-acid sequence, 283 residues long: Phosphatidylglycerol--prolipoprotein diacylglyceryl transferase (283 aa).

Transmembrane regions (helical) follow at residues 17-37 (LAVR…TFLG), 56-76 (FLTW…VLFY), 92-112 (WEGG…IWLF), and 117-137 (GIGF…GLAS). Residue Arg139 coordinates a 1,2-diacyl-sn-glycero-3-phospho-(1'-sn-glycerol). Transmembrane regions (helical) follow at residues 194–214 (PSQL…VWLF), 222–242 (GQVA…AEFA), and 255–275 (GLSM…VGFV).

It belongs to the Lgt family.

The protein resides in the cell inner membrane. The enzyme catalyses L-cysteinyl-[prolipoprotein] + a 1,2-diacyl-sn-glycero-3-phospho-(1'-sn-glycerol) = an S-1,2-diacyl-sn-glyceryl-L-cysteinyl-[prolipoprotein] + sn-glycerol 1-phosphate + H(+). The protein operates within protein modification; lipoprotein biosynthesis (diacylglyceryl transfer). Functionally, catalyzes the transfer of the diacylglyceryl group from phosphatidylglycerol to the sulfhydryl group of the N-terminal cysteine of a prolipoprotein, the first step in the formation of mature lipoproteins. This Neisseria meningitidis serogroup C / serotype 2a (strain ATCC 700532 / DSM 15464 / FAM18) protein is Phosphatidylglycerol--prolipoprotein diacylglyceryl transferase.